Here is a 296-residue protein sequence, read N- to C-terminus: ATP synthase gamma chain (296 aa).

This sequence belongs to the ATPase gamma chain family. In terms of assembly, F-type ATPases have 2 components, CF(1) - the catalytic core - and CF(0) - the membrane proton channel. CF(1) has five subunits: alpha(3), beta(3), gamma(1), delta(1), epsilon(1). CF(0) has three main subunits: a, b and c.

The protein localises to the cell inner membrane. In terms of biological role, produces ATP from ADP in the presence of a proton gradient across the membrane. The gamma chain is believed to be important in regulating ATPase activity and the flow of protons through the CF(0) complex. The sequence is that of ATP synthase gamma chain from Rhodopirellula baltica (strain DSM 10527 / NCIMB 13988 / SH1).